A 659-amino-acid chain; its full sequence is Protein kinase byr2 (659 aa).

Residues 4-67 (YTSKEVAEWL…LKQRDYLREF (64 aa)) enclose the SAM domain. A compositionally biased stretch (low complexity) spans 180–190 (PKLSSVLPTST). 2 disordered regions span residues 180–209 (PKLS…YQRP) and 354–387 (SFSP…EEDT). Residues 354–365 (SFSPGSSPSFIE) show a composition bias toward polar residues. Positions 367–380 (PSPISPTSTTSEDT) are enriched in low complexity. The region spanning 394–658 (WIRGALIGSG…ASELLSHPFV (265 aa)) is the Protein kinase domain. Residues 400–408 (IGSGSFGQV) and lysine 423 each bind ATP. The Proton acceptor role is filled by aspartate 522.

Belongs to the protein kinase superfamily. STE Ser/Thr protein kinase family. MAP kinase kinase kinase subfamily. In terms of assembly, interacts with rad24 and rad25; these prevent its translocation to the cell membrane during nitrogen starvation.

The protein localises to the cytoplasm. It localises to the cell membrane. The catalysed reaction is L-seryl-[protein] + ATP = O-phospho-L-seryl-[protein] + ADP + H(+). The enzyme catalyses L-threonyl-[protein] + ATP = O-phospho-L-threonyl-[protein] + ADP + H(+). Its function is as follows. Serine/threonine protein kinase involved in conjugation and sporulation. It is thought that it phosphorylates the byr1 protein kinase which itself phosphorylate the spk1 kinase. The sequence is that of Protein kinase byr2 from Schizosaccharomyces pombe (strain 972 / ATCC 24843) (Fission yeast).